The sequence spans 338 residues: MIGQAPAFWSRRNSLMGWVLSPIGALVGALTLKRMAGPSTGVPVPVICIGNPTVGGSGKTPTALMVLARLQEQGARPFALLRGHGGRLAGPVLVDPQTHTAADVGDEALLLAQATPTVVSRDRPAGAAHAVALGASHVVMDDGFQNPSLAKDVSLLVIDGEAGVGNGRVLPAGPLRAPLAPQLDRADALLVAGGGRCADALGRLAHSHGKVVLRGQVRPDPSVIATLEAGTVLAFAGIGRPQKLADTLAAAGVRIGRLQPFPDHHPYQPSDIAPLIAEAARERWQLVTTTKDHVRLADRRFADMAGAITALPVTMQLDAPEALDDILRLAEARAAARS.

An ATP-binding site is contributed by 53–60 (TVGGSGKT).

This sequence belongs to the LpxK family.

It catalyses the reaction a lipid A disaccharide + ATP = a lipid IVA + ADP + H(+). It participates in glycolipid biosynthesis; lipid IV(A) biosynthesis; lipid IV(A) from (3R)-3-hydroxytetradecanoyl-[acyl-carrier-protein] and UDP-N-acetyl-alpha-D-glucosamine: step 6/6. In terms of biological role, transfers the gamma-phosphate of ATP to the 4'-position of a tetraacyldisaccharide 1-phosphate intermediate (termed DS-1-P) to form tetraacyldisaccharide 1,4'-bis-phosphate (lipid IVA). The chain is Tetraacyldisaccharide 4'-kinase from Azorhizobium caulinodans (strain ATCC 43989 / DSM 5975 / JCM 20966 / LMG 6465 / NBRC 14845 / NCIMB 13405 / ORS 571).